A 347-amino-acid chain; its full sequence is Probable dual-specificity RNA methyltransferase RlmN (347 aa).

Glutamate 93 acts as the Proton acceptor in catalysis. Residues 100-323 form the Radical SAM core domain; sequence KAKRKTACVS…KKAGLNISTR (224 aa). An intrachain disulfide couples cysteine 107 to cysteine 334. Residues cysteine 114, cysteine 118, and cysteine 121 each coordinate [4Fe-4S] cluster. Residues 160 to 161, serine 192, 215 to 217, and asparagine 291 each bind S-adenosyl-L-methionine; these read GE and SLT. The active-site S-methylcysteine intermediate is the cysteine 334.

The protein belongs to the radical SAM superfamily. RlmN family. It depends on [4Fe-4S] cluster as a cofactor.

It localises to the cytoplasm. The catalysed reaction is adenosine(2503) in 23S rRNA + 2 reduced [2Fe-2S]-[ferredoxin] + 2 S-adenosyl-L-methionine = 2-methyladenosine(2503) in 23S rRNA + 5'-deoxyadenosine + L-methionine + 2 oxidized [2Fe-2S]-[ferredoxin] + S-adenosyl-L-homocysteine. It catalyses the reaction adenosine(37) in tRNA + 2 reduced [2Fe-2S]-[ferredoxin] + 2 S-adenosyl-L-methionine = 2-methyladenosine(37) in tRNA + 5'-deoxyadenosine + L-methionine + 2 oxidized [2Fe-2S]-[ferredoxin] + S-adenosyl-L-homocysteine. Specifically methylates position 2 of adenine 2503 in 23S rRNA and position 2 of adenine 37 in tRNAs. This Treponema denticola (strain ATCC 35405 / DSM 14222 / CIP 103919 / JCM 8153 / KCTC 15104) protein is Probable dual-specificity RNA methyltransferase RlmN.